The following is a 474-amino-acid chain: Glutamine synthetase (474 aa).

One can recognise a GS beta-grasp domain in the interval 14–99; that stretch reads EKIELIDLKF…VCSIKEPRTG (86 aa). The GS catalytic domain occupies 106-474; that stretch reads PRVIAQKAID…PYEFSIYYDV (369 aa). 2 residues coordinate Mg(2+): glutamate 131 and glutamate 133. An ATP-binding site is contributed by glutamate 211. Mg(2+) contacts are provided by glutamate 216 and glutamate 224. L-glutamate is bound by residues 268 to 269 and glycine 269; that span reads NG. Histidine 273 lines the Mg(2+) pocket. ATP contacts are provided by residues 275–277 and serine 277; that span reads HQS. Residues arginine 325, glutamate 331, and arginine 343 each coordinate L-glutamate. ATP-binding residues include arginine 343, arginine 348, and lysine 357. Position 362 (glutamate 362) interacts with Mg(2+). L-glutamate is bound at residue arginine 364. Tyrosine 402 bears the O-AMP-tyrosine mark.

The protein belongs to the glutamine synthetase family. In terms of assembly, oligomer of 12 subunits arranged in the form of two hexagons. It depends on Mg(2+) as a cofactor.

It is found in the cytoplasm. It catalyses the reaction L-glutamate + NH4(+) + ATP = L-glutamine + ADP + phosphate + H(+). With respect to regulation, the activity of this enzyme could be controlled by adenylation under conditions of abundant glutamine. Involved in nitrogen metabolism via ammonium assimilation. Catalyzes the ATP-dependent biosynthesis of glutamine from glutamate and ammonia. This is Glutamine synthetase from Nostoc sp. (strain PCC 7120 / SAG 25.82 / UTEX 2576).